We begin with the raw amino-acid sequence, 438 residues long: 2-(3-amino-3-carboxypropyl)histidine synthase subunit 1 (438 aa).

The disordered stretch occupies residues 7–29; sequence SGAAEQGGRDGPGRGRAPRGRVA. The [4Fe-4S] cluster site is built by Cys-110, Cys-214, and Cys-342. Positions 391–421 are disordered; the sequence is VNHGQDRRPHAPGRPARGKVQEGSARPPSAV.

It belongs to the DPH1/DPH2 family. DPH1 subfamily. Component of the 2-(3-amino-3-carboxypropyl)histidine synthase complex composed of DPH1, DPH2, DPH3 and a NADH-dependent reductase. Interacts with DPH2. Interacts with RBM8A. The cofactor is [4Fe-4S] cluster. In terms of tissue distribution, expressed in heart, brain, placenta, lung, liver, skeletal muscle, kidney, pancreas, spleen, thymus, mammary gland, colon, small intestine, testis and ovary. Reduced expression in primary breast and ovarian tumors.

The protein localises to the nucleus. The protein resides in the cytoplasm. It catalyses the reaction L-histidyl-[translation elongation factor 2] + S-adenosyl-L-methionine = 2-[(3S)-amino-3-carboxypropyl]-L-histidyl-[translation elongation factor 2] + S-methyl-5'-thioadenosine + H(+). The protein operates within protein modification; peptidyl-diphthamide biosynthesis. In terms of biological role, catalyzes the first step of diphthamide biosynthesis, a post-translational modification of histidine which occurs in elongation factor 2. DPH1 and DPH2 transfer a 3-amino-3-carboxypropyl (ACP) group from S-adenosyl-L-methionine (SAM) to a histidine residue, the reaction is assisted by a reduction system comprising DPH3 and a NADH-dependent reductase. Acts as a tumor suppressor. The chain is 2-(3-amino-3-carboxypropyl)histidine synthase subunit 1 from Homo sapiens (Human).